The sequence spans 253 residues: Chitooligosaccharide deacetylase (253 aa).

2 residues coordinate Mg(2+): His-61 and His-126.

It belongs to the YdjC deacetylase family. ChbG subfamily. As to quaternary structure, homodimer. Requires Mg(2+) as cofactor.

Its subcellular location is the cytoplasm. The catalysed reaction is N,N'-diacetylchitobiose + H2O = N-acetyl-beta-D-glucosaminyl-(1-&gt;4)-D-glucosamine + acetate. It catalyses the reaction diacetylchitobiose-6'-phosphate + H2O = N'-monoacetylchitobiose-6'-phosphate + acetate. It functions in the pathway glycan degradation; chitin degradation. Its function is as follows. Involved in the degradation of chitin. ChbG is essential for growth on the acetylated chitooligosaccharides chitobiose and chitotriose but is dispensable for growth on cellobiose and chitosan dimer, the deacetylated form of chitobiose. Deacetylation of chitobiose-6-P and chitotriose-6-P is necessary for both the activation of the chb promoter by the regulatory protein ChbR and the hydrolysis of phosphorylated beta-glucosides by the phospho-beta-glucosidase ChbF. Catalyzes the removal of only one acetyl group from chitobiose-6-P to yield monoacetylchitobiose-6-P, the inducer of ChbR and the substrate of ChbF. This is Chitooligosaccharide deacetylase from Yersinia pseudotuberculosis serotype O:1b (strain IP 31758).